The chain runs to 130 residues: Small ribosomal subunit protein uS9 (130 aa).

The tract at residues 109-130 (RKKERKKYGQRAARARFQYSKR) is disordered.

Belongs to the universal ribosomal protein uS9 family.

The sequence is that of Small ribosomal subunit protein uS9 from Oleidesulfovibrio alaskensis (strain ATCC BAA-1058 / DSM 17464 / G20) (Desulfovibrio alaskensis).